We begin with the raw amino-acid sequence, 247 residues long: Carboxy-S-adenosyl-L-methionine synthase (247 aa).

Residues Tyr39, 64–66, 89–90, 117–118, Asn132, and Arg199 contribute to the S-adenosyl-L-methionine site; these read GCS, DN, and DI.

Belongs to the class I-like SAM-binding methyltransferase superfamily. Cx-SAM synthase family. As to quaternary structure, homodimer.

The enzyme catalyses prephenate + S-adenosyl-L-methionine = carboxy-S-adenosyl-L-methionine + 3-phenylpyruvate + H2O. Functionally, catalyzes the conversion of S-adenosyl-L-methionine (SAM) to carboxy-S-adenosyl-L-methionine (Cx-SAM). The protein is Carboxy-S-adenosyl-L-methionine synthase of Shigella sonnei (strain Ss046).